We begin with the raw amino-acid sequence, 1798 residues long: MDSTFRRVVFFSNEFPSDDLKELFRRLDQHSKDRRFRLLSIFLEESTAILKDEVSKLPRPLKELVPPFGSVLGLVDVDFRQGPLGAAMESSMLTILELGLFIGHYESEDTEWDLVPGESVLAGLSIGILAAAAVALSSGLSDVAKAGAEAVRVSFRLGVYVADISAKLEAPQSDGTLSSWAHVVTEMTEASVQDELKQFNTDTHSPELTKVFISAADKTSVSVSGPPSRIKAAFQHSPVLRYSKSLPLPVYDGLCHASHLYTQSDIDSIINSAESVILPDRSVRLALLSSKTGKPFIAKTASELFLEIGTELLTGTIYLDNVTAGIVRHLQPQSKEMSSWQIDSFRTSLVLRSIHSAVEAKISGEQRQLTRRDLVNWVNKDFGPRRPRSHASSKLAIVGMACRLPGGANDLDLFWKLLEEGRDTLTTVPPDRFDLNTHYDPTGKTENTTQTPYGNFIDRPGFFDAGFFNMSPREAEQTDPMQRLALVTAYEALEMAGVVPGRTPSTHPSRIGTFYGQASDDWRELNASQNISTYAVPGGERAFGNGRINYFFKFSGPSFNLDTACSSGLAAVQAACSALWAGEVDTAIAGGLNVITDPDNYCGLGNAHFLSKTGQCKVWDKDADGYCRADGIGSVVIKRLEDAEADNDNILAVVLGACTNHSAEAISITHPHAGAQKANYRQVLNQAGVNPIDVSYIELHGTGTQAGDAVESESVSDIFAPVTPRRRPDQRLYLGAVKSNIGHGEAAAGIASLLKALLVYQKNLIPMHIGIKSEINPTIPKDLERRNVGLAMQNTPWPRPAGKKRLAVVNSFGAHGGNTTLLLEDAPERVKIQGTEDRITHSVLLSAKSKKSLQANMESLLSYLDQYPETSLADLAYTTSSRRMHHNMRFGTSVSCISGLQKVLRSQLDNPNFASEVRPVPNEVPSVILAFTGQGAYYHGMGRELFAEFPYFRAQVQQLDRLAQRLGFPSVVPVIENSIEDTPSSPILTQLSVVILEIALARFWSLLGVSISAVIGHSLGEYAALAVAGVISATDAIYLVGRRAQLIEERCAQGSHSMLSVRAPEDAIQKMLAAEPETASIAYEVSCCNTNQDTVIGGLNGEINDIRRALEAKSIKCTILDVPYAFHTAQMNPILDDLEALAKAVPFKAPSIPVISPLLATVIYDVKSLNADYLRRATRETVDFAAAIEAAQDMGLVDSKTIWIDVGPHPICAGLVRSMIPSASAMSSCRRNEDSISTISKSLVALYLAGINPCWAEFFKPREGEYSLLHLPKYRWNEIDYWIPYIGTWTLDKAHLKHGTKPTTPFSVSMSRPSALRTSLVHQITAETVEATTAMLHTISDMQHPDFLEAIHGHTMNKCGVATSSIWSDMAFTVGEYLYRRLVPNTKDVHMNLTDVEVLHAQVASKTKGSVQPLVLRAHLNLSTNSMSLSWFNADGETGECAAESFASAMIRFEDPVAWRKEWARLAHLVRGRIEVLEQRASEGKASRLSKPLAYALFKNVVDYADRYRGMDSVVLDELEAMAEVTLVPERYGTWHTPPHWIDSVSHLAGLVMNGSDASNTRDYFFVTPGCDSFRLLKKLEPGARYRSYVRMFPLPEDPNMHGGDVYILQGEEIVGMVGMIRFRRVPRLLMDRFFSPPTTTSVPGPVPPLAGVTMKYHDIAQTAPVRPTPTPPIVLPNPVVSSTMASKAPEPAPLLATSSESSTPKESPIVTPAESERADPVDNNMISQCLRLMARETGLEVEALTADASFVQLGVDSLMSLVLSEKFRTELGVEIKSSLFLECPTIGEMTAWIEEYC.

The interval 25–256 is N-terminal acylcarrier protein transacylase domain (SAT); that stretch reads RRLDQHSKDR…PLPVYDGLCH (232 aa). Residues 392–825 enclose the Ketosynthase family 3 (KS3) domain; the sequence is SSKLAIVGMA…GGNTTLLLED (434 aa). Residues 436 to 455 form a disordered region; the sequence is NTHYDPTGKTENTTQTPYGN. Polar residues predominate over residues 444-453; sequence KTENTTQTPY. Residues cysteine 565, histidine 700, and histidine 743 each act as for beta-ketoacyl synthase activity in the active site. Residues 931 to 1230 form a malonyl-CoA:ACP transacylase (MAT) domain region; that stretch reads FTGQGAYYHG…PSASAMSSCR (300 aa). The segment at 1322–1458 is N-terminal hotdog fold; it reads HQITAETVEA…AMIRFEDPVA (137 aa). The PKS/mFAS DH domain occupies 1322-1632; that stretch reads HQITAETVEA…FRRVPRLLMD (311 aa). The active-site Proton acceptor; for dehydratase activity is histidine 1354. The tract at residues 1390–1628 is product template (PT) domain; that stretch reads HMNLTDVEVL…GMIRFRRVPR (239 aa). Positions 1486-1632 are C-terminal hotdog fold; sequence ASRLSKPLAY…FRRVPRLLMD (147 aa). Residue aspartate 1543 is the Proton donor; for dehydratase activity of the active site. Positions 1685 to 1719 are disordered; sequence MASKAPEPAPLLATSSESSTPKESPIVTPAESERA. The span at 1698–1709 shows a compositional bias: low complexity; the sequence is TSSESSTPKESP. Residues 1721–1798 enclose the Carrier domain; sequence PVDNNMISQC…EMTAWIEEYC (78 aa). The residue at position 1758 (serine 1758) is an O-(pantetheine 4'-phosphoryl)serine.

Requires pantetheine 4'-phosphate as cofactor.

Its pathway is secondary metabolite biosynthesis. Non-reducing polyketide synthase; part of the gene cluster that mediates the biosynthesis of neosartoricin B, a prenylated anthracenone that probably exhibits T-cell antiproliferative activity, suggestive of a physiological role as an immunosuppressive agent. The non-reducing polyketide synthase nscA probably synthesizes and cyclizes the decaketide backbone. The hydrolase nscB then mediates the product release through hydrolysis followed by spontaneous decarboxylation. The prenyltransferase nscD catalyzes the addition of the dimethylallyl group to the aromatic C5. The FAD-dependent monooxygenase nscC is then responsible for the stereospecific hydroxylation at C2. Neosartoricin B can be converted into two additional compounds neosartoricins C and D. Neosartoricin C is a spirocyclic compound that is cyclized through the attack of C3 hydroxyl on C14, followed by dehydration. On the other hand, neosartoricin D is a further cyclized compound in which attack of C2 on C14 in neosartoricin C results in the formation of the acetal-containing dioxabicyclo-octanone ring. Both of these compounds are novel and possibly represent related metabolites of the gene cluster. This is Non-reducing polyketide synthase nscA from Arthroderma benhamiae (strain ATCC MYA-4681 / CBS 112371) (Trichophyton mentagrophytes).